Here is a 150-residue protein sequence, read N- to C-terminus: uncharacterized protein (150 aa).

A signal peptide spans 1-23 (MYSILIACLVLLLCLIIYVGHRA).

It belongs to the asfivirus EP152R family.

The protein resides in the virion. This is an uncharacterized protein from African swine fever virus (isolate Tick/South Africa/Pretoriuskop Pr4/1996) (ASFV).